The sequence spans 518 residues: MIPDVSQALAWLEKHPQALKGIQRGLERETLRVNADGTLATTGHPEALGSALTHKWITTDFAEALLEFITPVDGDIQHMLTFMRDLHRYTARKLGDERMWPLSMPCYIAEGQDIELAQYGTSNTGRFKTLYREGLKNRYGALMQTISGVHYNFSLPMAFWQAKCGVTEGEAAKEKISAGYFRLIRNYYRFGWVIPYLFGASPAICSSFLQGKPTTLPFEKTDCGMYYLPYATSLRLSDLGYTNKSQSNLGITFNDLHEYVAGLKRAIKTPSEEYARIGVEKDGKRLQINSNVLQIENELYAPIRPKRVTRSGESPSDALLRGGIEYIEVRSLDINPFSPIGVDEQQVRFLDLFMVWCVLADAPEMSSDELLCTRTNWNRVILEGRKPGLTLGIGCETAQFPLPKVGKDLFRDLKRVAQTLDSIHGGEEYQKVCDELVACFDNPELTFSARILRSMIDEGIGGTGKAFGEAYRNLLREEPLEILQEEEFIAERDASVRRQQEIEAADTEPFAAWLAKHA.

This sequence belongs to the glutamate--cysteine ligase type 1 family. Type 1 subfamily.

The catalysed reaction is L-cysteine + L-glutamate + ATP = gamma-L-glutamyl-L-cysteine + ADP + phosphate + H(+). It participates in sulfur metabolism; glutathione biosynthesis; glutathione from L-cysteine and L-glutamate: step 1/2. The chain is Glutamate--cysteine ligase from Salmonella agona (strain SL483).